Consider the following 451-residue polypeptide: Phosphoglucosamine mutase (451 aa).

Serine 101 functions as the Phosphoserine intermediate in the catalytic mechanism. Mg(2+) contacts are provided by serine 101, aspartate 240, aspartate 242, and aspartate 244. Serine 101 is modified (phosphoserine).

This sequence belongs to the phosphohexose mutase family. Requires Mg(2+) as cofactor. Activated by phosphorylation.

The catalysed reaction is alpha-D-glucosamine 1-phosphate = D-glucosamine 6-phosphate. Functionally, catalyzes the conversion of glucosamine-6-phosphate to glucosamine-1-phosphate. The polypeptide is Phosphoglucosamine mutase (Thioalkalivibrio sulfidiphilus (strain HL-EbGR7)).